Reading from the N-terminus, the 243-residue chain is Zinc import ATP-binding protein ZnuC (243 aa).

The 218-residue stretch at 25-242 (LVVDSITLFY…AKFMSVFPEN (218 aa)) folds into the ABC transporter domain. 57 to 64 (GPNGGGKT) is a binding site for ATP.

This sequence belongs to the ABC transporter superfamily. Zinc importer (TC 3.A.1.15.5) family. The complex is composed of two ATP-binding proteins (ZnuC), two transmembrane proteins (ZnuB) and a solute-binding protein (ZnuA).

Its subcellular location is the cell inner membrane. It catalyses the reaction Zn(2+)(out) + ATP(in) + H2O(in) = Zn(2+)(in) + ADP(in) + phosphate(in) + H(+)(in). Its function is as follows. Part of the ABC transporter complex ZnuABC involved in zinc import. Responsible for energy coupling to the transport system. The sequence is that of Zinc import ATP-binding protein ZnuC from Anaplasma phagocytophilum (strain HZ).